A 193-amino-acid polypeptide reads, in one-letter code: Protein CURVATURE THYLAKOID 1D, chloroplastic (193 aa).

The N-terminal 51 residues, 1–51 (MELCTRSTTIITHLPASFNGHGYLAGKSVDRISLPLQRNVASLVLQSRTLR), are a transit peptide targeting the chloroplast. Residues 52–117 (CSRKFPGETV…NDIKLDSDKT (66 aa)) are Stromal-facing. The helical transmembrane segment at 118–138 (YSILLYGSGAIVALYLTSAIV) threads the bilayer. Residues 139 to 142 (SSLE) lie on the Lumenal side of the membrane. The chain crosses the membrane as a helical span at residues 143-163 (AIPLFPKLMEVVGLGYTLWFT). Residues 164–193 (TRYLLFKRNREELKTKVSEIKKQVLGSDSE) are Stromal-facing.

The protein belongs to the CURT family. In terms of assembly, homo- and heterodimers and trimers.

The protein resides in the plastid. The protein localises to the chloroplast thylakoid membrane. In terms of biological role, determines thylakoid architecture by inducing membrane curvature. The polypeptide is Protein CURVATURE THYLAKOID 1D, chloroplastic (CURT1D) (Arabidopsis thaliana (Mouse-ear cress)).